We begin with the raw amino-acid sequence, 506 residues long: Dipeptide and tripeptide permease A (506 aa).

Over 1–36 the chain is Cytoplasmic; it reads MSTANNNSESTESVSMNAFKQPKAFYLIFSIELWER. A helical membrane pass occupies residues 37 to 57; it reads FGYYGLQGIMAVYLVKMLGMS. Over 58–61 the chain is Periplasmic; that stretch reads ETDS. The chain crosses the membrane as a helical span at residues 62 to 82; the sequence is ITLFSSFSALVYGFVAIGGWL. The Cytoplasmic segment spans residues 83–91; sequence GDKVLGTKR. The next 2 membrane-spanning stretches (helical) occupy residues 92–112 and 113–133; these read VIVL…YSGH and SVAW…LFKA. The Cytoplasmic segment spans residues 134 to 155; it reads NPSALLSTCYAKDDPRLDGAFT. A helical transmembrane segment spans residues 156-176; it reads MYYMAVNIGSFFSMLATPVLA. Residues 177 to 180 lie on the Periplasmic side of the membrane; it reads ANYG. A helical transmembrane segment spans residues 181 to 201; the sequence is WSVAFSLSVVGMILTLVNFMF. Residues 202–222 are Cytoplasmic-facing; sequence CRKWVSTQGSQPDFQPINLKK. A helical membrane pass occupies residues 223–243; it reads LVITLAGIVVLVALSTWLLHN. Over 244–248 the chain is Periplasmic; it reads QGVAR. The chain crosses the membrane as a helical span at residues 249 to 269; that stretch reads WILTIISLAVVAIFIKEMLAV. The Cytoplasmic portion of the chain corresponds to 270–276; sequence SGAERRK. Residues 277–297 form a helical membrane-spanning segment; sequence MIVALLLMLEAVVFFVLYNQM. Residues 298 to 322 are Periplasmic-facing; that stretch reads PTSLNFFAIRNVEHSILGFAFEPEQ. The helical transmembrane segment at 323–343 threads the bilayer; sequence YQALNPFWIMVASPLLAAVYN. Topologically, residues 344–354 are cytoplasmic; that stretch reads KMGDQLPMAHK. Residues 355-375 traverse the membrane as a helical segment; sequence FAIGMVLCSGAFLVLPWGASM. Over 376–385 the chain is Periplasmic; the sequence is ANEQGIVSVN. A helical membrane pass occupies residues 386–406; it reads WLILCYGLQSIGELMISGLGL. The Cytoplasmic segment spans residues 407 to 416; sequence AMVAQLVPQR. The helical transmembrane segment at 417-437 threads the bilayer; that stretch reads LMGFIMGAWFLTSAGAAIIAG. Topologically, residues 438–461 are periplasmic; that stretch reads YVANMMAVPENVVDPHVSLEVYSN. A helical transmembrane segment spans residues 462-482; it reads VFMQIGIVTGIIAVLMMLTAP. The Cytoplasmic portion of the chain corresponds to 483–506; the sequence is KLTRMTQDVATDVPADAATTTASA.

This sequence belongs to the major facilitator superfamily. Proton-dependent oligopeptide transporter (POT/PTR) (TC 2.A.17) family. DtpA subfamily.

The protein localises to the cell inner membrane. Functionally, proton-dependent permease that transports di- and tripeptides. The protein is Dipeptide and tripeptide permease A of Pectobacterium carotovorum subsp. carotovorum (strain PC1).